The following is a 211-amino-acid chain: Ribonuclease HII (211 aa).

Residues 2–211 enclose the RNase H type-2 domain; it reads MLILGVDEAG…TAQRLKASSV (210 aa). A divalent metal cation contacts are provided by aspartate 8, glutamate 9, and aspartate 106.

This sequence belongs to the RNase HII family. Requires Mn(2+) as cofactor. It depends on Mg(2+) as a cofactor.

It localises to the cytoplasm. It catalyses the reaction Endonucleolytic cleavage to 5'-phosphomonoester.. Its function is as follows. Endonuclease that specifically degrades the RNA of RNA-DNA hybrids. This chain is Ribonuclease HII, found in Methanothrix thermoacetophila (strain DSM 6194 / JCM 14653 / NBRC 101360 / PT) (Methanosaeta thermophila).